Consider the following 214-residue polypeptide: Cytochrome c biogenesis ATP-binding export protein CcmA (214 aa).

One can recognise an ABC transporter domain in the interval 8 to 212; it reads LYAADLACLK…PPTVLDLSEV (205 aa). 40–47 is an ATP binding site; the sequence is GPNGFGKT.

The protein belongs to the ABC transporter superfamily. CcmA exporter (TC 3.A.1.107) family. In terms of assembly, the complex is composed of two ATP-binding proteins (CcmA) and two transmembrane proteins (CcmB).

The protein localises to the cell inner membrane. The catalysed reaction is heme b(in) + ATP + H2O = heme b(out) + ADP + phosphate + H(+). Its function is as follows. Part of the ABC transporter complex CcmAB involved in the biogenesis of c-type cytochromes; once thought to export heme, this seems not to be the case, but its exact role is uncertain. Responsible for energy coupling to the transport system. The protein is Cytochrome c biogenesis ATP-binding export protein CcmA of Aromatoleum aromaticum (strain DSM 19018 / LMG 30748 / EbN1) (Azoarcus sp. (strain EbN1)).